The sequence spans 51 residues: Cytochrome b559 subunit beta (51 aa).

Residues 26-42 (WLAVHALTVPTIFFLGA) traverse the membrane as a helical segment. His30 is a heme binding site.

The protein belongs to the PsbE/PsbF family. Heterodimer of an alpha subunit and a beta subunit. PSII is composed of 1 copy each of membrane proteins PsbA, PsbB, PsbC, PsbD, PsbE, PsbF, PsbH, PsbI, PsbJ, PsbK, PsbL, PsbM, PsbT, PsbX, Psb30/Ycf12, peripheral proteins PsbO, CyanoQ (PsbQ), PsbU, PsbV and a large number of cofactors. It forms dimeric complexes. Requires heme b as cofactor.

It is found in the cell inner membrane. In terms of biological role, this b-type cytochrome is tightly associated with the reaction center of photosystem II (PSII). PSII is a light-driven water:plastoquinone oxidoreductase that uses light energy to abstract electrons from H(2)O, generating O(2) and a proton gradient subsequently used for ATP formation. It consists of a core antenna complex that captures photons, and an electron transfer chain that converts photonic excitation into a charge separation. The sequence is that of Cytochrome b559 subunit beta from Gloeobacter violaceus (strain ATCC 29082 / PCC 7421).